The primary structure comprises 337 residues: Pyridoxal 5'-phosphate synthase subunit PdxS (337 aa).

Position 65 (D65) interacts with D-ribose 5-phosphate. Residue K122 is the Schiff-base intermediate with D-ribose 5-phosphate of the active site. G194 contributes to the D-ribose 5-phosphate binding site. K206 is a D-glyceraldehyde 3-phosphate binding site. Residues G255 and 276–277 (GS) contribute to the D-ribose 5-phosphate site.

The protein belongs to the PdxS/SNZ family. In the presence of PdxT, forms a dodecamer of heterodimers.

It catalyses the reaction aldehydo-D-ribose 5-phosphate + D-glyceraldehyde 3-phosphate + L-glutamine = pyridoxal 5'-phosphate + L-glutamate + phosphate + 3 H2O + H(+). The protein operates within cofactor biosynthesis; pyridoxal 5'-phosphate biosynthesis. Its function is as follows. Catalyzes the formation of pyridoxal 5'-phosphate from ribose 5-phosphate (RBP), glyceraldehyde 3-phosphate (G3P) and ammonia. The ammonia is provided by the PdxT subunit. Can also use ribulose 5-phosphate and dihydroxyacetone phosphate as substrates, resulting from enzyme-catalyzed isomerization of RBP and G3P, respectively. This chain is Pyridoxal 5'-phosphate synthase subunit PdxS, found in Metallosphaera sedula (strain ATCC 51363 / DSM 5348 / JCM 9185 / NBRC 15509 / TH2).